Consider the following 372-residue polypeptide: GDP-mannose 4,6 dehydratase (372 aa).

The tract at residues 1–20 (MAHAPARCPSARGSGDGEMG) is disordered. Position 2 is an N-acetylalanine (Ala-2). Residues 30–35 (GITGQD), 55–58 (RRSS), 86–87 (DL), 108–112 (LGAQS), and Tyr-123 contribute to the NADP(+) site. Thr-155 is an active-site residue. Active-site nucleophile residues include Glu-157 and Tyr-179. Residues Lys-183, His-209, and Arg-214 each coordinate NADP(+). Residue Tyr-323 is modified to Phosphotyrosine.

It belongs to the NAD(P)-dependent epimerase/dehydratase family. GDP-mannose 4,6-dehydratase subfamily. Requires NADP(+) as cofactor. Highly expressed in pancreas and small intestine. Expressed in thymus, protstate, colon, heart, placenta, liver and kidney. Expressed at low levels in spleen, testis, brain and lung.

It carries out the reaction GDP-alpha-D-mannose = GDP-4-dehydro-alpha-D-rhamnose + H2O. It participates in nucleotide-sugar biosynthesis; GDP-L-fucose biosynthesis via de novo pathway; GDP-L-fucose from GDP-alpha-D-mannose: step 1/2. With respect to regulation, inhibited by GDP-fucose. In terms of biological role, catalyzes the conversion of GDP-D-mannose to GDP-4-dehydro-6-deoxy-D-mannose. The sequence is that of GDP-mannose 4,6 dehydratase from Homo sapiens (Human).